The primary structure comprises 131 residues: Small ribosomal subunit protein bS6 (131 aa).

The segment at 98 to 131 is disordered; that stretch reads EASPMVKAKDERRERREDFANETADDSEAGDSEE. Over residues 104–116 the composition is skewed to basic and acidic residues; the sequence is KAKDERRERREDF. Over residues 120–131 the composition is skewed to acidic residues; the sequence is TADDSEAGDSEE.

Belongs to the bacterial ribosomal protein bS6 family.

Its function is as follows. Binds together with bS18 to 16S ribosomal RNA. The protein is Small ribosomal subunit protein bS6 of Klebsiella pneumoniae (strain 342).